We begin with the raw amino-acid sequence, 214 residues long: rRNA methyltransferase 2, mitochondrial (214 aa).

A mitochondrion-targeting transit peptide spans 1–18; sequence MFSTKKSQGNLHKYIQRQ. Residues 63-66, Asp83, 100-101, and Asp125 contribute to the S-adenosyl-L-methionine site; these read PGSW and DI. Lys169 acts as the Proton acceptor in catalysis.

Belongs to the class I-like SAM-binding methyltransferase superfamily. RNA methyltransferase RlmE family.

It is found in the mitochondrion. The enzyme catalyses a uridine in rRNA + S-adenosyl-L-methionine = a 2'-O-methyluridine in rRNA + S-adenosyl-L-homocysteine + H(+). S-adenosyl-L-methionine-dependent 2'-O-ribose methyltransferase that catalyzes the formation of 2'-O-methyluridine at position 808 (Um808) in the mitochondrial large subunit ribosomal RNA (mtLSU rRNA), a universally conserved modification in the peptidyl transferase domain of the mtLSU rRNA. This activity may require prior 2'-O-methylguanosine modification at position 809 (Gm809) by MRM3. Essential for late-stage assembly of mtLSU required for efficient translation of mitochondrial DNA encoded proteins; methyltransferase activity is not required for this function. Essential for mitochondrial respiratory function. In Caenorhabditis elegans, this protein is rRNA methyltransferase 2, mitochondrial.